A 497-amino-acid chain; its full sequence is uncharacterized protein (497 aa).

The disordered stretch occupies residues 58-79; that stretch reads ISTRSFRNDGNDSDPQTLDPDA. Helical transmembrane passes span 86 to 106, 120 to 140, 155 to 175, 180 to 200, 222 to 242, 258 to 278, 309 to 329, 348 to 368, 378 to 398, 407 to 427, 438 to 458, and 468 to 488; these read IAFV…ALPI, FSGL…YPML, FRPL…YSLA, WLYL…MFLY, LNIL…GLLA, VGSW…SIFF, FMLV…AGYQ, GNFL…STFL, MLYG…LDVL, FVLY…LISL, ILVG…GAIC, and VGFI…LLFL.

This sequence belongs to the major facilitator superfamily.

It is found in the membrane. This is an uncharacterized protein from Schizosaccharomyces pombe (strain 972 / ATCC 24843) (Fission yeast).